We begin with the raw amino-acid sequence, 96 residues long: Myoglobin (96 aa).

In terms of domain architecture, Globin spans Gly-1–Gly-96. Ser-3 carries the post-translational modification Phosphoserine. His-61 serves as a coordination point for nitrite. Position 61 (His-61) interacts with O2. The residue at position 64 (Thr-64) is a Phosphothreonine.

It belongs to the globin family. Monomeric.

The protein resides in the cytoplasm. Its subcellular location is the sarcoplasm. It catalyses the reaction Fe(III)-heme b-[protein] + nitric oxide + H2O = Fe(II)-heme b-[protein] + nitrite + 2 H(+). It carries out the reaction H2O2 + AH2 = A + 2 H2O. In terms of biological role, monomeric heme protein which primary function is to store oxygen and facilitate its diffusion within muscle tissues. Reversibly binds oxygen through a pentacoordinated heme iron and enables its timely and efficient release as needed during periods of heightened demand. Depending on the oxidative conditions of tissues and cells, and in addition to its ability to bind oxygen, it also has a nitrite reductase activity whereby it regulates the production of bioactive nitric oxide. Under stress conditions, like hypoxia and anoxia, it also protects cells against reactive oxygen species thanks to its pseudoperoxidase activity. The sequence is that of Myoglobin (MB) from Ailuropoda melanoleuca (Giant panda).